Reading from the N-terminus, the 283-residue chain is Pantothenate synthetase (283 aa).

Residue 30–37 coordinates ATP; sequence MGNLHAGH. His37 acts as the Proton donor in catalysis. Gln61 lines the (R)-pantoate pocket. Gln61 serves as a coordination point for beta-alanine. ATP is bound at residue 149–152; the sequence is GEKD. Gln155 provides a ligand contact to (R)-pantoate. Residues Leu178 and 186–189 contribute to the ATP site; that span reads MSSR.

It belongs to the pantothenate synthetase family. In terms of assembly, homodimer.

Its subcellular location is the cytoplasm. It carries out the reaction (R)-pantoate + beta-alanine + ATP = (R)-pantothenate + AMP + diphosphate + H(+). The protein operates within cofactor biosynthesis; (R)-pantothenate biosynthesis; (R)-pantothenate from (R)-pantoate and beta-alanine: step 1/1. Catalyzes the condensation of pantoate with beta-alanine in an ATP-dependent reaction via a pantoyl-adenylate intermediate. The chain is Pantothenate synthetase from Hahella chejuensis (strain KCTC 2396).